Here is a 348-residue protein sequence, read N- to C-terminus: MTVRIAINGFGRIGRNVVRALYESGRRAEITVVAINELADAAGMAHLLKYDTSHGRFAWEVRHEREQLFVGDDVIRILHERTLADLPWRELGVDVVLDCTGVYGNREHGEAHIAAGAKKVLFSHPGSNDLDATVVFGVNQNQLRAEHRIVSNASCTTNCIIPVIKLLDDAYGIESGTVTTIHSAMNDQQVIDAYHSDLRRTRAASQSIIPVDTKLAAGITRIFPQFNDRFEAIAVRVPTINVTAIDLSVTVKKTVKASEVNQLLQKAAQGAFHGIVDYTESPLVSIDFNHDPHSAIVDGTQTRVSGAHLIKTLVWCDNEWGFANRMLDTTLAMAAVGFRLDASASTKL.

NAD(+)-binding positions include 12–13 and Arg81; that span reads RI. Substrate-binding positions include 154 to 156, Arg200, 213 to 214, and Arg236; these read SCT and TK. The active-site Nucleophile is the Cys155. Asn318 contacts NAD(+).

The protein belongs to the glyceraldehyde-3-phosphate dehydrogenase family. Epd subfamily. In terms of assembly, homotetramer.

The protein resides in the cytoplasm. The catalysed reaction is D-erythrose 4-phosphate + NAD(+) + H2O = 4-phospho-D-erythronate + NADH + 2 H(+). It participates in cofactor biosynthesis; pyridoxine 5'-phosphate biosynthesis; pyridoxine 5'-phosphate from D-erythrose 4-phosphate: step 1/5. In terms of biological role, catalyzes the NAD-dependent conversion of D-erythrose 4-phosphate to 4-phosphoerythronate. The polypeptide is D-erythrose-4-phosphate dehydrogenase (Salmonella paratyphi B (strain ATCC BAA-1250 / SPB7)).